Reading from the N-terminus, the 49-residue chain is Large ribosomal subunit protein bL33B (49 aa).

The protein belongs to the bacterial ribosomal protein bL33 family.

The polypeptide is Large ribosomal subunit protein bL33B (Listeria welshimeri serovar 6b (strain ATCC 35897 / DSM 20650 / CCUG 15529 / CIP 8149 / NCTC 11857 / SLCC 5334 / V8)).